We begin with the raw amino-acid sequence, 406 residues long: Plasma serine protease inhibitor (406 aa).

A signal peptide spans 1 to 19 (MQLFLLLCLVLLSPQGASL). Residues 20 to 25 (HRHHPR) constitute a propeptide, removed in mature form. O-linked (GalNAc...) threonine glycosylation occurs at T39. 3 N-linked (GlcNAc...) asparagine glycosylation sites follow: N249, N262, and N338.

Belongs to the serpin family. In terms of assembly, forms protease inhibiting heterodimers in extracellular body fluids with serine proteases such as activated protein C/coagulation factor V/F5, acrosin/ACR, chymotrypsinogen B/CTRB1, prothrombin/F2, factor Xa/F10, factor XI/F11, kallikrein/KLKB1, tissue kallikrein, trypsin/PRSS1, prostate specific antigen/KLK3, tissue plasminogen activator/PLAT and urinary plasminogen activator/PLAU. Forms membrane-anchored serine proteases inhibiting heterodimers with TMPRSS7 and TMPRSS11E. Interacts with SEMG2. In terms of processing, N- and O-glycosylated. N-glycosylation consists of a mixture of sialylated bi- (including sialyl-Lewis X epitopes), tri- and tetra-antennary complex-type chains; affects the maximal heparin- and thrombomodulin-enhanced rates of thrombin inhibition. O-glycosylated with core 1 or possibly core 8 glycans. Further modified with 2 sialic acid residues. Post-translationally, proteolytically cleaved. Inhibition of proteases is accompanied by formation of a stable enzyme-inhibitor complex and by degradation of the serpin to lower molecular weight derivatives. Proteolytically cleaved at the N-terminus; inhibits slightly the heparin- and thrombomodulin-enhanced rates of thrombin inhibition. In terms of tissue distribution, predominantly expressed in the epithelium of seminal vesicles. Expressed in the proximal tubular epithelium of the kidney. Expressed in the superficial and more differentiated epidermal keratinocytes of the skin. Expressed in megakaryocytes and platelets. Expressed poorly in kidney tumor cells compared to non tumor kidney tissues. Expressed in spermatozoa. Present in very high concentration in seminal plasma. Present in high concentration in plasma, synovial and Graaf follicle fluids. Present in low concentration in breast milk and in amniotic fluids. Present in very low concentration in urine, cerebrospinal fluids, saliva and tears (at protein level). Strongly expressed in liver. Expressed in kidney, spleen, pancreas, skeletal muscle, heart, testes, ovary, interstitial Leydig cells, epididymal glands, seminal vesicles and prostate.

It is found in the secreted. The protein resides in the extracellular space. Its activity is regulated as follows. Its inhibitory activity is greatly enhanced in the presence of glycosaminoglycans, heparin, thrombomodulin and phospholipids vesicles. In terms of biological role, heparin-dependent serine protease inhibitor acting in body fluids and secretions. Inactivates serine proteases by binding irreversibly to their serine activation site. Involved in the regulation of intravascular and extravascular proteolytic activities. Plays hemostatic roles in the blood plasma. Acts as a procoagulant and pro-inflammatory factor by inhibiting the anticoagulant activated protein C factor as well as the generation of activated protein C factor by the thrombin/thrombomodulin complex. Acts as an anticoagulant factor by inhibiting blood coagulation factors like prothrombin, factor XI, factor Xa, plasma kallikrein and fibrinolytic enzymes such as tissue- and urinary-type plasminogen activators. In seminal plasma, inactivates several serine proteases implicated in the reproductive system. Inhibits the serpin acrosin; indirectly protects component of the male genital tract from being degraded by excessive released acrosin. Inhibits tissue- and urinary-type plasminogen activator, prostate-specific antigen and kallikrein activities; has a control on the sperm motility and fertilization. Inhibits the activated protein C-catalyzed degradation of SEMG1 and SEMG2; regulates the degradation of semenogelin during the process of transfer of spermatozoa from the male reproductive tract into the female tract. In urine, inhibits urinary-type plasminogen activator and kallikrein activities. Inactivates membrane-anchored serine proteases activities such as MPRSS7 and TMPRSS11E. Inhibits urinary-type plasminogen activator-dependent tumor cell invasion and metastasis. May also play a non-inhibitory role in seminal plasma and urine as a hydrophobic hormone carrier by its binding to retinoic acid. The polypeptide is Plasma serine protease inhibitor (SERPINA5) (Homo sapiens (Human)).